A 214-amino-acid polypeptide reads, in one-letter code: Cytochrome b (214 aa).

4 helical membrane passes run Phe31–Ile51, Trp75–Ile96, Trp111–Leu131, and Phe176–Leu196. Positions 81 and 95 each coordinate heme b. Residues His180 and His194 each contribute to the heme b site. His199 provides a ligand contact to a ubiquinone.

This sequence belongs to the cytochrome b family. As to quaternary structure, the cytochrome bc1 complex contains 3 respiratory subunits (MT-CYB, CYC1 and UQCRFS1), 2 core proteins (UQCRC1 and UQCRC2) and probably 6 low-molecular weight proteins. The cofactor is heme b.

The protein resides in the mitochondrion inner membrane. In terms of biological role, component of the ubiquinol-cytochrome c reductase complex (complex III or cytochrome b-c1 complex) that is part of the mitochondrial respiratory chain. The b-c1 complex mediates electron transfer from ubiquinol to cytochrome c. Contributes to the generation of a proton gradient across the mitochondrial membrane that is then used for ATP synthesis. This is Cytochrome b (MT-CYB) from Lachesis muta muta (Bushmaster).